The following is a 153-amino-acid chain: Ribosomal RNA large subunit methyltransferase H (153 aa).

S-adenosyl-L-methionine-binding positions include Leu-75, Gly-102, and Leu-121 to Met-126.

The protein belongs to the RNA methyltransferase RlmH family. In terms of assembly, homodimer.

Its subcellular location is the cytoplasm. The catalysed reaction is pseudouridine(1915) in 23S rRNA + S-adenosyl-L-methionine = N(3)-methylpseudouridine(1915) in 23S rRNA + S-adenosyl-L-homocysteine + H(+). Specifically methylates the pseudouridine at position 1915 (m3Psi1915) in 23S rRNA. This Nitratiruptor sp. (strain SB155-2) protein is Ribosomal RNA large subunit methyltransferase H.